Consider the following 182-residue polypeptide: Ribosome-recycling factor (182 aa).

The segment at 136 to 156 is disordered; that stretch reads IRKQEKNSDISKDESRDLQDK.

Belongs to the RRF family.

Its subcellular location is the cytoplasm. Responsible for the release of ribosomes from messenger RNA at the termination of protein biosynthesis. May increase the efficiency of translation by recycling ribosomes from one round of translation to another. The sequence is that of Ribosome-recycling factor from Trichodesmium erythraeum (strain IMS101).